The sequence spans 424 residues: O-methyltransferase aunD (424 aa).

Asp275 contacts S-adenosyl-L-methionine. His326 serves as the catalytic Proton acceptor.

This sequence belongs to the class I-like SAM-binding methyltransferase superfamily. Cation-independent O-methyltransferase family.

The protein operates within secondary metabolite biosynthesis. Functionally, O-methyltransferase; part of the gene cluster that mediates the biosynthesis of aurasperone B, a dimeric gamma-naphthopyrone. The first step in the biosynthesis of aurasperone B is the production of gamma-naphthopyrone precursor YWA1 by the non-reducing polyketide synthase albA, via condensation of one acetyl-CoA starter unit with 6 malonyl-CoA units. YWA1 is then methylated by aunE at position C-6 to yield foncesin which is further methylated at position C-8 by aunD to produce fonsecin B. A key enzyme in the biosynthetic pathway is the cytochrome P450 monooxygenase aunB which catalyzes the oxidative dimerization of fonsecin B to aurasperone B. AunB also catalyzes the oxidative dimerization of rubrofusarin B into aurasperone A. The sequence is that of O-methyltransferase aunD from Aspergillus niger (strain ATCC MYA-4892 / CBS 513.88 / FGSC A1513).